The chain runs to 477 residues: Dihydrolipoyl dehydrogenase (477 aa).

FAD contacts are provided by residues Glu-41–Cys-50, Lys-59, Gly-124, and Thr-153–Ser-155. A disulfide bridge links Cys-50 with Cys-55. NAD(+) is bound by residues Gly-190–Glu-197, Glu-213, Val-248, and Gly-282. Residues Asp-323 and Met-330–His-333 each bind FAD. His-456 serves as the catalytic Proton acceptor.

It belongs to the class-I pyridine nucleotide-disulfide oxidoreductase family. Homodimer. Requires FAD as cofactor.

It catalyses the reaction N(6)-[(R)-dihydrolipoyl]-L-lysyl-[protein] + NAD(+) = N(6)-[(R)-lipoyl]-L-lysyl-[protein] + NADH + H(+). The sequence is that of Dihydrolipoyl dehydrogenase (LPD) from Trypanosoma cruzi.